We begin with the raw amino-acid sequence, 505 residues long: Ent-kaurene oxidase 2 (505 aa).

A helical transmembrane segment spans residues 3 to 23 (AFVPGGAGAAAAAVGGFVAAA). Heme is bound at residue Cys449.

It belongs to the cytochrome P450 family. Requires heme as cofactor. In terms of tissue distribution, widely expressed.

Its subcellular location is the membrane. The enzyme catalyses ent-kaur-16-ene + 3 reduced [NADPH--hemoprotein reductase] + 3 O2 = ent-kaur-16-en-19-oate + 3 oxidized [NADPH--hemoprotein reductase] + 4 H2O + 4 H(+). Its pathway is plant hormone biosynthesis; gibberellin biosynthesis. Functionally, catalyzes three successive oxidations of the 4-methyl group of ent-kaurene giving kaurenoic acid, a key step in gibberellins (GAs) biosynthesis. GAs, which are involved many processes, including stem elongation, play a central role in plant development. This chain is Ent-kaurene oxidase 2, found in Oryza sativa subsp. japonica (Rice).